Here is a 212-residue protein sequence, read N- to C-terminus: Imidazole glycerol phosphate synthase subunit HisH (212 aa).

The 211-residue stretch at R2–S212 folds into the Glutamine amidotransferase type-1 domain. C85 acts as the Nucleophile in catalysis. Residues H192 and E194 contribute to the active site.

Heterodimer of HisH and HisF.

The protein localises to the cytoplasm. The enzyme catalyses 5-[(5-phospho-1-deoxy-D-ribulos-1-ylimino)methylamino]-1-(5-phospho-beta-D-ribosyl)imidazole-4-carboxamide + L-glutamine = D-erythro-1-(imidazol-4-yl)glycerol 3-phosphate + 5-amino-1-(5-phospho-beta-D-ribosyl)imidazole-4-carboxamide + L-glutamate + H(+). The catalysed reaction is L-glutamine + H2O = L-glutamate + NH4(+). Its pathway is amino-acid biosynthesis; L-histidine biosynthesis; L-histidine from 5-phospho-alpha-D-ribose 1-diphosphate: step 5/9. Functionally, IGPS catalyzes the conversion of PRFAR and glutamine to IGP, AICAR and glutamate. The HisH subunit catalyzes the hydrolysis of glutamine to glutamate and ammonia as part of the synthesis of IGP and AICAR. The resulting ammonia molecule is channeled to the active site of HisF. The protein is Imidazole glycerol phosphate synthase subunit HisH of Gluconobacter oxydans (strain 621H) (Gluconobacter suboxydans).